We begin with the raw amino-acid sequence, 159 residues long: Putative 4-hydroxy-4-methyl-2-oxoglutarate aldolase (159 aa).

Residues 78 to 81 (GDVI) and Arg-100 contribute to the substrate site. Position 101 (Asp-101) interacts with a divalent metal cation.

Belongs to the class II aldolase/RraA-like family. Homotrimer. A divalent metal cation serves as cofactor.

The catalysed reaction is 4-hydroxy-4-methyl-2-oxoglutarate = 2 pyruvate. It carries out the reaction oxaloacetate + H(+) = pyruvate + CO2. Catalyzes the aldol cleavage of 4-hydroxy-4-methyl-2-oxoglutarate (HMG) into 2 molecules of pyruvate. Also contains a secondary oxaloacetate (OAA) decarboxylase activity due to the common pyruvate enolate transition state formed following C-C bond cleavage in the retro-aldol and decarboxylation reactions. This chain is Putative 4-hydroxy-4-methyl-2-oxoglutarate aldolase, found in Mycobacterium sp. (strain JLS).